Here is a 332-residue protein sequence, read N- to C-terminus: Phosphoribulokinase (332 aa).

This sequence belongs to the phosphoribulokinase family.

It catalyses the reaction D-ribulose 5-phosphate + ATP = D-ribulose 1,5-bisphosphate + ADP + H(+). It functions in the pathway carbohydrate biosynthesis; Calvin cycle. This Synechocystis sp. (strain ATCC 27184 / PCC 6803 / Kazusa) protein is Phosphoribulokinase (prk).